The following is a 150-amino-acid chain: Calmodulin-like protein 7 (150 aa).

4 EF-hand domains span residues 1–36, 37–72, 75–110, and 113–148; these read MDPTELKRVFQMFDKNGDGTITGKELSETLRSLGIY, IPDKELTQMIEKIDVNGDGCVDIDEFGELYKTIMDE, EEEEDMKEAFNVFDQNGDGFITVDELKAVLSSLGLK, and KTLDDCKKMIKKVDVDGDGRVNYKEFRQMMKGGGFN. Residues aspartate 14, asparagine 16, aspartate 18, threonine 20, glutamate 25, aspartate 50, asparagine 52, aspartate 54, cysteine 56, glutamate 61, aspartate 88, asparagine 90, aspartate 92, glutamate 99, aspartate 126, aspartate 128, aspartate 130, arginine 132, and glutamate 137 each coordinate Ca(2+).

It belongs to the calmodulin family.

Functionally, potential calcium sensor. The polypeptide is Calmodulin-like protein 7 (CML7) (Arabidopsis thaliana (Mouse-ear cress)).